Here is a 274-residue protein sequence, read N- to C-terminus: Transcription factor MYB32 (274 aa).

HTH myb-type domains follow at residues 9 to 61 (KDHT…INYL) and 62 to 116 (RPDL…KRKL). DNA-binding regions (H-T-H motif) lie at residues 37 to 61 (WRSL…INYL) and 89 to 112 (WSLI…NTHV). A disordered region spans residues 123–144 (PATHRPINETKTSQDSSDSSKT).

Mostly expressed in roots, and, to a lower extent, in stems, flower buds, and siliques.

It is found in the nucleus. The protein is Transcription factor MYB32 (MYB32) of Arabidopsis thaliana (Mouse-ear cress).